We begin with the raw amino-acid sequence, 205 residues long: MEVNVINIESQNIGKIDLNPLIFSVNYRPDILKMVVEWQLSKRRVGAHKTKTIGDVSGTTAKPYRQKHTGRARQGSLRSPQFRGGAVIFGPVVRSHAYSLNKKVRNLGLKVALSLKNSCNKLLILDSIDVNFVKTAQVLRFIKNFEHQSFLIIGKDYNKGMMYSCKNLHNVTLLKQIGTNVFDILRHDCVILTVDTVKYLEDRLL.

Residues 56–78 are disordered; it reads VSGTTAKPYRQKHTGRARQGSLR.

The protein belongs to the universal ribosomal protein uL4 family. In terms of assembly, part of the 50S ribosomal subunit.

One of the primary rRNA binding proteins, this protein initially binds near the 5'-end of the 23S rRNA. It is important during the early stages of 50S assembly. It makes multiple contacts with different domains of the 23S rRNA in the assembled 50S subunit and ribosome. Functionally, forms part of the polypeptide exit tunnel. The chain is Large ribosomal subunit protein uL4 from Ehrlichia ruminantium (strain Gardel).